Here is a 356-residue protein sequence, read N- to C-terminus: Histidinol-phosphate aminotransferase (356 aa).

Position 208 is an N6-(pyridoxal phosphate)lysine (K208).

The protein belongs to the class-II pyridoxal-phosphate-dependent aminotransferase family. Histidinol-phosphate aminotransferase subfamily. In terms of assembly, homodimer. Requires pyridoxal 5'-phosphate as cofactor.

It catalyses the reaction L-histidinol phosphate + 2-oxoglutarate = 3-(imidazol-4-yl)-2-oxopropyl phosphate + L-glutamate. Its pathway is amino-acid biosynthesis; L-histidine biosynthesis; L-histidine from 5-phospho-alpha-D-ribose 1-diphosphate: step 7/9. This is Histidinol-phosphate aminotransferase from Lactococcus lactis subsp. cremoris (strain MG1363).